The sequence spans 261 residues: Gap junction beta-6 protein (261 aa).

Over 1-22 the chain is Cytoplasmic; the sequence is MDWGTLHTFIGGVNKHSTSIGK. Residues 23–45 form a helical membrane-spanning segment; the sequence is VWITVIFIFRVMILVVAAQEVWG. Topologically, residues 46–75 are extracellular; it reads DEQEDFVCNTLQPGCKNVCYDHFFPVSHIR. Residues 76 to 98 form a helical membrane-spanning segment; that stretch reads LWALQLIFVSTPALLVAMHVAYY. At 99 to 131 the chain is on the cytoplasmic side; the sequence is RHETTRKFRRGEKRNDFKDIEDIKKQKVRIEGS. Residues 132–154 form a helical membrane-spanning segment; the sequence is LWWTYTSSIFFRIIFEAAFMYVF. The Extracellular portion of the chain corresponds to 155–192; that stretch reads YFLYNGYHLPWVLKCGIDPCPNLVDCFISRPTEKTVFT. Residues 193–215 form a helical membrane-spanning segment; it reads IFMISASVICMLLNVAELCYLLL. The Cytoplasmic portion of the chain corresponds to 216–261; the sequence is KVCFRRSKRAQTQKNHPNHALKESKQNEMNELISDSGQNAITGFPS.

This sequence belongs to the connexin family. Beta-type (group I) subfamily. A connexon is composed of a hexamer of connexins. Interacts with CNST.

It localises to the cell membrane. The protein localises to the cell junction. The protein resides in the gap junction. One gap junction consists of a cluster of closely packed pairs of transmembrane channels, the connexons, through which materials of low MW diffuse from one cell to a neighboring cell. The chain is Gap junction beta-6 protein (GJB6) from Homo sapiens (Human).